We begin with the raw amino-acid sequence, 124 residues long: Fluoride-specific ion channel FluC (124 aa).

4 helical membrane-spanning segments follow: residues 4–24, 35–55, 62–82, and 95–115; these read VLFV…ISLL, FGTL…FALG, PEIK…FSTF, and LVKA…VVYL. Na(+)-binding residues include Gly-74 and Thr-77.

It belongs to the fluoride channel Fluc/FEX (TC 1.A.43) family.

It is found in the cell inner membrane. The enzyme catalyses fluoride(in) = fluoride(out). Na(+) is not transported, but it plays an essential structural role and its presence is essential for fluoride channel function. Its function is as follows. Fluoride-specific ion channel. Important for reducing fluoride concentration in the cell, thus reducing its toxicity. The sequence is that of Fluoride-specific ion channel FluC from Shewanella halifaxensis (strain HAW-EB4).